The following is a 201-amino-acid chain: Retinol binding protein 4 (201 aa).

The N-terminal stretch at 1–18 (MAWVWALVLLAALGSARA) is a signal peptide. 3 disulfides stabilise this stretch: Cys22–Cys178, Cys88–Cys192, and Cys138–Cys147. Gln116 provides a ligand contact to substrate. Position 139 is an omega-N-methylarginine (Arg139).

It belongs to the calycin superfamily. Lipocalin family. Interacts with TTR. Interaction with TTR prevents its loss by filtration through the kidney glomeruli. Interacts with STRA6. As to expression, highly expressed in liver. Also expressed in adipose tissue. Expressed by endometrium from days 16-25 and by unattached chorioallantois from days 30-36 during pregnancy.

Its subcellular location is the secreted. Retinol-binding protein that mediates retinol transport in blood plasma. Delivers retinol from the liver stores to the peripheral tissues. Transfers the bound all-trans retinol to STRA6, that then facilitates retinol transport across the cell membrane. This is Retinol binding protein 4 from Felis catus (Cat).